A 171-amino-acid polypeptide reads, in one-letter code: Large ribosomal subunit protein uL10 (171 aa).

This sequence belongs to the universal ribosomal protein uL10 family. As to quaternary structure, part of the ribosomal stalk of the 50S ribosomal subunit. The N-terminus interacts with L11 and the large rRNA to form the base of the stalk. The C-terminus forms an elongated spine to which L12 dimers bind in a sequential fashion forming a multimeric L10(L12)X complex.

Functionally, forms part of the ribosomal stalk, playing a central role in the interaction of the ribosome with GTP-bound translation factors. This is Large ribosomal subunit protein uL10 from Corynebacterium efficiens (strain DSM 44549 / YS-314 / AJ 12310 / JCM 11189 / NBRC 100395).